Reading from the N-terminus, the 131-residue chain is Small ribosomal subunit protein uS8 (131 aa).

This sequence belongs to the universal ribosomal protein uS8 family. In terms of assembly, part of the 30S ribosomal subunit. Contacts proteins S5 and S12.

Functionally, one of the primary rRNA binding proteins, it binds directly to 16S rRNA central domain where it helps coordinate assembly of the platform of the 30S subunit. This chain is Small ribosomal subunit protein uS8, found in Novosphingobium aromaticivorans (strain ATCC 700278 / DSM 12444 / CCUG 56034 / CIP 105152 / NBRC 16084 / F199).